The following is a 118-amino-acid chain: MSRRVKKLNQLFRADISALLQKEVRDPRLDTLLSVNEVDVSEDMRHATVYVSHLAGDEHKDEILAALNAAAGFFRTEIAKKTDIRYMPVFNFIWDDTIERGVRLNTLIDRVTQHQPED.

It belongs to the RbfA family. Monomer. Binds 30S ribosomal subunits, but not 50S ribosomal subunits or 70S ribosomes.

It is found in the cytoplasm. Its function is as follows. One of several proteins that assist in the late maturation steps of the functional core of the 30S ribosomal subunit. Associates with free 30S ribosomal subunits (but not with 30S subunits that are part of 70S ribosomes or polysomes). Required for efficient processing of 16S rRNA. May interact with the 5'-terminal helix region of 16S rRNA. The polypeptide is Ribosome-binding factor A (Dehalococcoides mccartyi (strain ATCC BAA-2266 / KCTC 15142 / 195) (Dehalococcoides ethenogenes (strain 195))).